A 207-amino-acid chain; its full sequence is Glutathione S-transferase 3 (207 aa).

In terms of domain architecture, GST N-terminal spans 2-79; that stretch reads VHYKLTYFNA…YLARKFGFVG (78 aa). Glutathione is bound by residues Y8, K43, 49-51, and 63-64; these read GQV and QS. The 127-residue stretch at 81–207 folds into the GST C-terminal domain; the sequence is TAEEELQADE…WLAKRPETRF (127 aa).

It belongs to the GST superfamily. Sigma family.

The catalysed reaction is RX + glutathione = an S-substituted glutathione + a halide anion + H(+). In terms of biological role, conjugation of reduced glutathione to a wide number of exogenous and endogenous hydrophobic electrophiles. This chain is Glutathione S-transferase 3 (gst-3), found in Caenorhabditis elegans.